Consider the following 1063-residue polypeptide: Coiled-coil domain-containing protein 187 (1063 aa).

Disordered regions lie at residues 1–41 (MPTL…AADW), 62–184 (RWPG…SRLH), 219–278 (RVEA…KDED), 300–319 (PPPVLRRHHSKDPSRDPALT), 392–484 (RKGG…ERLG), 496–539 (GQAC…ATQP), and 551–658 (WEDP…LEEK). Residues 111–124 (SSVSSGRLSCSSGG) show a composition bias toward low complexity. Residues 146-160 (RKSDARLEQLRDKIR) are compositionally biased toward basic and acidic residues. The span at 163–181 (AWQQGSCASLGTSAPSSAS) shows a compositional bias: polar residues. Over residues 219-233 (RVEAKASHGQGRELS) the composition is skewed to basic and acidic residues. Basic and acidic residues-rich tracts occupy residues 431–442 (TERKHSSLERAR) and 472–484 (SFQRPESPHERLG). The span at 508–517 (QRQGPSSQRP) shows a compositional bias: low complexity. The stretch at 816–851 (HLRHKQAQLQALETTAKVLKQRVDSLTAKLQGAEAL) forms a coiled coil. The tract at residues 1010-1030 (PRSCGKGDPADRPWAGWSGGR) is disordered.

This is Coiled-coil domain-containing protein 187 from Homo sapiens (Human).